Here is an 87-residue protein sequence, read N- to C-terminus: Bradykinin-potentiating peptide NDBP12 (87 aa).

A signal peptide spans 1–22 (MNKRVLLVIFFVTLLVADEVNS). Over residues 64 to 75 (PAEAPAPAAAAP) the composition is skewed to low complexity. Residues 64-87 (PAEAPAPAAAAPEEPPVEQRRRRR) are disordered.

It belongs to the non-disulfide-bridged peptide (NDBP) superfamily. Long chain multifunctional peptide (group 2) family. As to expression, expressed by the venom gland.

It localises to the secreted. In terms of biological role, inhibits angiotensin-converting enzyme (ACE), but does not serve as substrate for the enzyme. Potentiates bradykinin (BK) on the isolated guinea pig ileum as well as the isolated rat uterus for contraction. Also potentiates in vivo the depressor effect of BK on arterial blood pressure in the normotensive anesthetized rat. This Lychas mucronatus (Chinese swimming scorpion) protein is Bradykinin-potentiating peptide NDBP12.